We begin with the raw amino-acid sequence, 582 residues long: TRAF-type zinc finger domain-containing protein 1 (582 aa).

Position 2 is an N-acetylalanine (Ala-2). The TRAF-type zinc finger occupies 27-103 (IHEIHCQRNI…DLELSILKLK (77 aa)). Position 191 is a phosphoserine (Ser-191). The interval 217-236 (EQERQERNRGQQPPKEGGEE) is disordered. Residues Ser-278, Ser-320, Ser-326, Ser-327, Ser-409, Ser-415, Ser-430, and Ser-470 each carry the phosphoserine modification. Residues 401–582 (TEGIPRLDSQ…AGDAEEEEEE (182 aa)) are disordered. Composition is skewed to polar residues over residues 454 to 471 (PINNMTATYNQLSRSTSG) and 486 to 495 (LSNSDSQDIQ).

As to quaternary structure, interacts with MAVS, TICAM1, TRAF1, TRAF2, TRAF3. Interacts with TRAF6.

Negative feedback regulator that controls excessive innate immune responses. Regulates both Toll-like receptor 4 (TLR4) and DDX58/RIG1-like helicases (RLH) pathways. May inhibit the LTR pathway by direct interaction with TRAF6 and attenuation of NF-kappa-B activation. May negatively regulate the RLH pathway downstream from MAVS and upstream of NF-kappa-B and IRF3. In Homo sapiens (Human), this protein is TRAF-type zinc finger domain-containing protein 1 (TRAFD1).